The primary structure comprises 143 residues: uncharacterized protein (143 aa).

In terms of domain architecture, HTH cro/C1-type spans 24 to 78 (IRQRREWQNMSQTTLGEAIGVTFQQVQKYEKGVNRVGAGRLQQISKALKVEPSYF). Residues 35–54 (QTTLGEAIGVTFQQVQKYEK) constitute a DNA-binding region (H-T-H motif).

This is an uncharacterized protein from Sinorhizobium fredii (strain NBRC 101917 / NGR234).